The sequence spans 433 residues: Peptidoglycan glycosyltransferase RodA (433 aa).

12 helical membrane-spanning segments follow: residues 9–29 (FDYL…LFIY), 44–64 (YLKQ…VSMY), 74–94 (TLIF…GRYV), 100–120 (WIGV…AYIL), 158–178 (LGTA…AGFP), 181–201 (LIFA…LPLW), 221–241 (LSLF…VGYL), 249–269 (YWIT…LLGV), 295–315 (WHII…MGYL), 341–361 (WGFV…LHTL), 378–398 (GVLG…MGIM), and 400–420 (ITGI…TAMI).

It belongs to the SEDS family. MrdB/RodA subfamily.

Its subcellular location is the cell inner membrane. The enzyme catalyses [GlcNAc-(1-&gt;4)-Mur2Ac(oyl-L-Ala-gamma-D-Glu-L-Lys-D-Ala-D-Ala)](n)-di-trans,octa-cis-undecaprenyl diphosphate + beta-D-GlcNAc-(1-&gt;4)-Mur2Ac(oyl-L-Ala-gamma-D-Glu-L-Lys-D-Ala-D-Ala)-di-trans,octa-cis-undecaprenyl diphosphate = [GlcNAc-(1-&gt;4)-Mur2Ac(oyl-L-Ala-gamma-D-Glu-L-Lys-D-Ala-D-Ala)](n+1)-di-trans,octa-cis-undecaprenyl diphosphate + di-trans,octa-cis-undecaprenyl diphosphate + H(+). The protein operates within cell wall biogenesis; peptidoglycan biosynthesis. Functionally, peptidoglycan polymerase that is essential for cell wall elongation. The chain is Peptidoglycan glycosyltransferase RodA from Treponema pallidum (strain Nichols).